The chain runs to 433 residues: Cell division control protein KAR1 (433 aa).

Disordered stretches follow at residues 1–38, 69–101, and 207–227; these read MNVTSPKDGNHSFSKKNRFNTNKPRFHKLNEQAQSINL, TKNINSDSDRSNDTIKQNNYNKRETGYNPFYNG, and KPLPLPYLNSPNSDSTPTLQR. Position 233 is a phosphothreonine (threonine 233).

Interacts with SPC72.

The protein resides in the cytoplasm. The protein localises to the cytoskeleton. It is found in the microtubule organizing center. It localises to the spindle pole body. Its function is as follows. KAR1 is required for function of both intranuclear and extranuclear microtubules. KAR1 helps localize CDC31 to the spindle pole body (SPB), CDC31 then initiates SPB duplication via interaction with a downstream effector. This is Cell division control protein KAR1 (KAR1) from Saccharomyces cerevisiae (strain ATCC 204508 / S288c) (Baker's yeast).